We begin with the raw amino-acid sequence, 155 residues long: Putative pre-16S rRNA nuclease (155 aa).

It belongs to the YqgF nuclease family.

Its subcellular location is the cytoplasm. Could be a nuclease involved in processing of the 5'-end of pre-16S rRNA. This Xylella fastidiosa (strain M12) protein is Putative pre-16S rRNA nuclease.